The chain runs to 504 residues: Maturase K (504 aa).

It belongs to the intron maturase 2 family. MatK subfamily.

It localises to the plastid. Its subcellular location is the chloroplast. Usually encoded in the trnK tRNA gene intron. Probably assists in splicing its own and other chloroplast group II introns. In Simmondsia chinensis (Jojoba), this protein is Maturase K.